A 206-amino-acid polypeptide reads, in one-letter code: Ribosomal RNA large subunit methyltransferase E (206 aa).

S-adenosyl-L-methionine is bound by residues glycine 63, tryptophan 65, aspartate 83, aspartate 99, and aspartate 124. Catalysis depends on lysine 164, which acts as the Proton acceptor.

The protein belongs to the class I-like SAM-binding methyltransferase superfamily. RNA methyltransferase RlmE family.

The protein resides in the cytoplasm. It catalyses the reaction uridine(2552) in 23S rRNA + S-adenosyl-L-methionine = 2'-O-methyluridine(2552) in 23S rRNA + S-adenosyl-L-homocysteine + H(+). In terms of biological role, specifically methylates the uridine in position 2552 of 23S rRNA at the 2'-O position of the ribose in the fully assembled 50S ribosomal subunit. The sequence is that of Ribosomal RNA large subunit methyltransferase E from Buchnera aphidicola subsp. Acyrthosiphon pisum (strain APS) (Acyrthosiphon pisum symbiotic bacterium).